We begin with the raw amino-acid sequence, 396 residues long: Elongation factor Tu (396 aa).

One can recognise a tr-type G domain in the interval 10 to 206 (KPHCNIGTIG…AVDAYIPQPE (197 aa)). The tract at residues 19–26 (GHVDHGKT) is G1. GTP is bound at residue 19-26 (GHVDHGKT). Thr-26 contributes to the Mg(2+) binding site. The tract at residues 60–64 (GITIS) is G2. Residues 81 to 84 (DCPG) form a G3 region. GTP is bound by residues 81–85 (DCPGH) and 136–139 (NKCD). The interval 136–139 (NKCD) is G4. The segment at 174-176 (SAL) is G5.

This sequence belongs to the TRAFAC class translation factor GTPase superfamily. Classic translation factor GTPase family. EF-Tu/EF-1A subfamily. Monomer.

The protein resides in the cytoplasm. The enzyme catalyses GTP + H2O = GDP + phosphate + H(+). Functionally, GTP hydrolase that promotes the GTP-dependent binding of aminoacyl-tRNA to the A-site of ribosomes during protein biosynthesis. The chain is Elongation factor Tu from Nitrobacter hamburgensis (strain DSM 10229 / NCIMB 13809 / X14).